The sequence spans 1178 residues: DNA-directed RNA polymerase subunit beta (1178 aa).

This sequence belongs to the RNA polymerase beta chain family. As to quaternary structure, the RNAP catalytic core consists of 2 alpha, 1 beta, 1 beta' and 1 omega subunit. When a sigma factor is associated with the core the holoenzyme is formed, which can initiate transcription.

The enzyme catalyses RNA(n) + a ribonucleoside 5'-triphosphate = RNA(n+1) + diphosphate. Its function is as follows. DNA-dependent RNA polymerase catalyzes the transcription of DNA into RNA using the four ribonucleoside triphosphates as substrates. The polypeptide is DNA-directed RNA polymerase subunit beta (Treponema pallidum (strain Nichols)).